The chain runs to 1260 residues: uncharacterized protein (1260 aa).

The protein resides in the plastid. Its subcellular location is the chloroplast. This is an uncharacterized protein from Ostreococcus tauri.